Here is a 31-residue protein sequence, read N- to C-terminus: Cytochrome b6-f complex subunit 6 (31 aa).

The helical transmembrane segment at 3-23 (IITSYFGFLLTALTIASALFI) threads the bilayer.

It belongs to the PetL family. The 4 large subunits of the cytochrome b6-f complex are cytochrome b6, subunit IV (17 kDa polypeptide, PetD), cytochrome f and the Rieske protein, while the 4 small subunits are PetG, PetL, PetM and PetN. The complex functions as a dimer.

The protein resides in the plastid. It localises to the chloroplast thylakoid membrane. Functionally, component of the cytochrome b6-f complex, which mediates electron transfer between photosystem II (PSII) and photosystem I (PSI), cyclic electron flow around PSI, and state transitions. PetL is important for photoautotrophic growth as well as for electron transfer efficiency and stability of the cytochrome b6-f complex. The chain is Cytochrome b6-f complex subunit 6 from Helianthus annuus (Common sunflower).